We begin with the raw amino-acid sequence, 458 residues long: Bifunctional protein GlmU (458 aa).

The segment at 1–230 (MSLPTYSKLN…EWQVAGINSK (230 aa)) is pyrophosphorylase. UDP-N-acetyl-alpha-D-glucosamine is bound by residues 14-17 (LAAG), Lys28, Gln79, and 84-85 (GT). Mg(2+) is bound at residue Asp108. Residues Gly141, Glu155, Asn170, and Asn228 each coordinate UDP-N-acetyl-alpha-D-glucosamine. Asn228 serves as a coordination point for Mg(2+). The interval 231-251 (QDLAALERVYQGRYAARLLAK) is linker. The segment at 252 to 458 (GVTLADPSRI…NWKRPEKVKK (207 aa)) is N-acetyltransferase. Positions 334 and 352 each coordinate UDP-N-acetyl-alpha-D-glucosamine. Catalysis depends on His364, which acts as the Proton acceptor. The UDP-N-acetyl-alpha-D-glucosamine site is built by Tyr367 and Asn378. Acetyl-CoA contacts are provided by residues Ala381, 387–388 (NY), Ser406, Ala424, and Arg441.

In the N-terminal section; belongs to the N-acetylglucosamine-1-phosphate uridyltransferase family. The protein in the C-terminal section; belongs to the transferase hexapeptide repeat family. Homotrimer. It depends on Mg(2+) as a cofactor.

The protein localises to the cytoplasm. The enzyme catalyses alpha-D-glucosamine 1-phosphate + acetyl-CoA = N-acetyl-alpha-D-glucosamine 1-phosphate + CoA + H(+). It carries out the reaction N-acetyl-alpha-D-glucosamine 1-phosphate + UTP + H(+) = UDP-N-acetyl-alpha-D-glucosamine + diphosphate. Its pathway is nucleotide-sugar biosynthesis; UDP-N-acetyl-alpha-D-glucosamine biosynthesis; N-acetyl-alpha-D-glucosamine 1-phosphate from alpha-D-glucosamine 6-phosphate (route II): step 2/2. The protein operates within nucleotide-sugar biosynthesis; UDP-N-acetyl-alpha-D-glucosamine biosynthesis; UDP-N-acetyl-alpha-D-glucosamine from N-acetyl-alpha-D-glucosamine 1-phosphate: step 1/1. It functions in the pathway bacterial outer membrane biogenesis; LPS lipid A biosynthesis. Its function is as follows. Catalyzes the last two sequential reactions in the de novo biosynthetic pathway for UDP-N-acetylglucosamine (UDP-GlcNAc). The C-terminal domain catalyzes the transfer of acetyl group from acetyl coenzyme A to glucosamine-1-phosphate (GlcN-1-P) to produce N-acetylglucosamine-1-phosphate (GlcNAc-1-P), which is converted into UDP-GlcNAc by the transfer of uridine 5-monophosphate (from uridine 5-triphosphate), a reaction catalyzed by the N-terminal domain. This chain is Bifunctional protein GlmU, found in Methylobacillus flagellatus (strain ATCC 51484 / DSM 6875 / VKM B-1610 / KT).